The following is a 500-amino-acid chain: Probable cardiolipin synthase YwiE (500 aa).

The next 3 helical transmembrane spans lie at 6–26 (LEFF…FFPV), 31–51 (FYGG…SLIL), and 59–79 (TLLW…FYLF). 2 consecutive PLD phosphodiesterase domains span residues 237–264 (LNFR…GKEY) and 413–440 (QKGF…DMRS). Catalysis depends on residues H242, K244, D249, H418, K420, and D425.

Belongs to the phospholipase D family. Cardiolipin synthase subfamily.

The protein resides in the cell membrane. The enzyme catalyses 2 a 1,2-diacyl-sn-glycero-3-phospho-(1'-sn-glycerol) = a cardiolipin + glycerol. Functionally, catalyzes the reversible phosphatidyl group transfer from one phosphatidylglycerol molecule to another to form cardiolipin (CL) (diphosphatidylglycerol) and glycerol. May have a role in the heat shock response since the level of the transcript of ywiE increases after a heat shock. This chain is Probable cardiolipin synthase YwiE (ywiE), found in Bacillus subtilis (strain 168).